Consider the following 156-residue polypeptide: CASP-like protein 5C1 (156 aa).

The Cytoplasmic segment spans residues 1-24; the sequence is MENRERAGAGAVGSAGSLGLRVEQ. A helical transmembrane segment spans residues 25 to 45; it reads AVFSSASLLFMSVGVEFFSYT. Residue Ala46 is a topological domain, extracellular. The helical transmembrane segment at 47 to 67 threads the bilayer; the sequence is FCFLVTIMGLVIPWSCTLAMI. Residues 68-81 are Cytoplasmic-facing; the sequence is DVYSILVGCPLRVP. The chain crosses the membrane as a helical span at residues 82 to 102; that stretch reads GVMVIVVIGDWVLAILSLAAA. Over 103–132 the chain is Extracellular; sequence SSSAAVIDLLLQFHGSHCSPRFCGRYQLSA. The helical transmembrane segment at 133–153 threads the bilayer; the sequence is MMAFLSWFLTAASSLFNLWFI. Over 154-156 the chain is Cytoplasmic; that stretch reads ASR.

This sequence belongs to the Casparian strip membrane proteins (CASP) family. Homodimer and heterodimers.

The protein resides in the cell membrane. In Oryza sativa subsp. indica (Rice), this protein is CASP-like protein 5C1.